The following is a 124-amino-acid chain: Protein BEX3 (124 aa).

The disordered stretch occupies residues 1–56 (MANVHQENEEMEQPLQNGQEDRPVGGGEGHQPAANNNNNNHNHNHNHHRRGQARRL). Basic residues predominate over residues 42–53 (NHNHNHHRRGQA). The interaction with p75NTR/NGFR stretch occupies residues 81–106 (EMFMEEMREIRRKLRELQLRNCLRIL). Positions 81-124 (EMFMEEMREIRRKLRELQLRNCLRILMGELSNHHDHHDEFCLMP) are interaction with 14-3-3 epsilon. The short motif at 90 to 100 (IRRKLRELQLR) is the Nuclear export signal element. Residues 113 to 117 (HHDHH) are his cluster. Residue Cys121 coordinates Zn(2+).

This sequence belongs to the BEX family. As to quaternary structure, self-associates. Binds to the DEATH domain of p75NTR/NGFR. Interacts with 14-3-3 epsilon (YWHAE). Interacts with DIABLO/SMAC. Post-translationally, ubiquitinated. Degraded by the proteasome. In terms of tissue distribution, widely expressed.

It is found in the nucleus. Its subcellular location is the cytoplasm. The protein resides in the cytosol. Its function is as follows. May be a signaling adapter molecule involved in NGFR/p75NTR-mediated apoptosis induced by NGF. Plays a role in zinc-triggered neuronal death. In absence of reductive stress, acts as a pseudosubstrate for the CRL2(FEM1B) complex: associates with FEM1B via zinc, thereby preventing association between FEM1B and its substrates. The polypeptide is Protein BEX3 (Mus musculus (Mouse)).